We begin with the raw amino-acid sequence, 88 residues long: Elongation factor 1-beta (88 aa).

Belongs to the EF-1-beta/EF-1-delta family.

Its function is as follows. Promotes the exchange of GDP for GTP in EF-1-alpha/GDP, thus allowing the regeneration of EF-1-alpha/GTP that could then be used to form the ternary complex EF-1-alpha/GTP/AAtRNA. The chain is Elongation factor 1-beta from Halorubrum lacusprofundi (strain ATCC 49239 / DSM 5036 / JCM 8891 / ACAM 34).